We begin with the raw amino-acid sequence, 429 residues long: Serine hydroxymethyltransferase (429 aa).

G120–I122 serves as a coordination point for (6S)-5,6,7,8-tetrahydrofolate. The residue at position 226 (K226) is an N6-(pyridoxal phosphate)lysine.

This sequence belongs to the SHMT family. In terms of assembly, homodimer. The cofactor is pyridoxal 5'-phosphate.

Its subcellular location is the cytoplasm. The enzyme catalyses 5,10-methylenetetrahydromethanopterin + glycine + H2O = 5,6,7,8-tetrahydromethanopterin + L-serine. The catalysed reaction is L-allo-threonine = acetaldehyde + glycine. It participates in amino-acid biosynthesis; glycine biosynthesis; glycine from L-serine: step 1/1. In terms of biological role, catalyzes the reversible interconversion of serine and glycine with tetrahydromethanopterin (H4MPT) serving as the one-carbon carrier. The use of tetrahydrofolate (THF or H4PteGlu) as the pteridine substrate is 450-fold less efficient than that of H4MPT. Also exhibits a pteridine-independent aldolase activity toward beta-hydroxyamino acids, producing glycine and aldehydes, via a retro-aldol mechanism. Thus, is able to catalyze the cleavage of L-allo-threonine and L-threo-beta-phenylserine. The sequence is that of Serine hydroxymethyltransferase from Methanocaldococcus jannaschii (strain ATCC 43067 / DSM 2661 / JAL-1 / JCM 10045 / NBRC 100440) (Methanococcus jannaschii).